The chain runs to 78 residues: Acyl carrier protein (78 aa).

Positions 2 to 77 (SDIEQRVKQA…SAIDYVTKKL (76 aa)) constitute a Carrier domain. Ser37 is modified (O-(pantetheine 4'-phosphoryl)serine).

Belongs to the acyl carrier protein (ACP) family. Post-translationally, 4'-phosphopantetheine is transferred from CoA to a specific serine of apo-ACP by AcpS. This modification is essential for activity because fatty acids are bound in thioester linkage to the sulfhydryl of the prosthetic group.

The protein resides in the cytoplasm. It functions in the pathway lipid metabolism; fatty acid biosynthesis. Carrier of the growing fatty acid chain in fatty acid biosynthesis. This chain is Acyl carrier protein, found in Acinetobacter baumannii (strain AB307-0294).